A 279-amino-acid chain; its full sequence is Vacuolar iron transporter cccA (279 aa).

The segment at 1 to 44 (MLGGRHSHWSPQDLEEQAFSPYGTFPPSPTESTETSSSISSTRP) is disordered. Positions 30-44 (TESTETSSSISSTRP) are enriched in low complexity. 5 helical membrane-spanning segments follow: residues 55–75 (ILGL…LSAL), 80–100 (VVVV…GLGG), 185–205 (ITLA…YFMV), 208–228 (VLVA…VFGY), and 243–263 (IVAG…AAGA).

Belongs to the CCC1 family.

Its subcellular location is the vacuole membrane. It catalyses the reaction Fe(2+)(in) = Fe(2+)(out). Its function is as follows. Vacuolar iron transporter involved in the transfer of iron from the cytosol to the vacuole for intracellular iron storage. Plays an essential role in iron detoxification during high iron conditions. This is Vacuolar iron transporter cccA from Arthroderma benhamiae (strain ATCC MYA-4681 / CBS 112371) (Trichophyton mentagrophytes).